A 387-amino-acid polypeptide reads, in one-letter code: Protein RecA (387 aa).

ATP is bound at residue Gly78–Thr85. A compositionally biased stretch (basic and acidic residues) spans Lys355–Ser369. Residues Lys355–Glu387 are disordered.

Belongs to the RecA family.

The protein localises to the cytoplasm. Functionally, can catalyze the hydrolysis of ATP in the presence of single-stranded DNA, the ATP-dependent uptake of single-stranded DNA by duplex DNA, and the ATP-dependent hybridization of homologous single-stranded DNAs. It interacts with LexA causing its activation and leading to its autocatalytic cleavage. In Leptospira biflexa serovar Patoc (strain Patoc 1 / ATCC 23582 / Paris), this protein is Protein RecA.